The chain runs to 395 residues: Flagellin B (395 aa).

Belongs to the bacterial flagellin family.

The protein resides in the secreted. Its subcellular location is the bacterial flagellum. Functionally, flagellin is the subunit protein which polymerizes to form the filaments of bacterial flagella. This is Flagellin B (flaB) from Rhizobium meliloti (Ensifer meliloti).